Reading from the N-terminus, the 202-residue chain is Small ribosomal subunit protein uS4 (202 aa).

Basic residues predominate over residues 1-13; that stretch reads MSRYRGPRLRITR. The tract at residues 1–43 is disordered; sequence MSRYRGPRLRITRRLGDLPGLTRKAAKRSHPPGQHGQARRKRS. In terms of domain architecture, S4 RNA-binding spans 90–152; that stretch reads NRLDNVCFRL…KGSKKLAEAN (63 aa).

Belongs to the universal ribosomal protein uS4 family. In terms of assembly, part of the 30S ribosomal subunit. Contacts protein S5. The interaction surface between S4 and S5 is involved in control of translational fidelity.

One of the primary rRNA binding proteins, it binds directly to 16S rRNA where it nucleates assembly of the body of the 30S subunit. Functionally, with S5 and S12 plays an important role in translational accuracy. The polypeptide is Small ribosomal subunit protein uS4 (Prochlorococcus marinus (strain MIT 9303)).